Consider the following 977-residue polypeptide: Aspartate, glycine, lysine and serine-rich protein (977 aa).

The tract at residues 23–116 (GVLPDVDSGF…PITNLGSSTS (94 aa)) is disordered. The segment covering 37-50 (EETKSEPKQPDTKP) has biased composition (basic and acidic residues). Polar residues predominate over residues 51–63 (EQPSVSKPDSSVN). N-linked (GlcNAc...) asparagine glycosylation is present at asparagine 136. Disordered regions lie at residues 246–767 (AGGG…TSRG) and 780–922 (GGGK…GSGL). Positions 251–278 (YYSDSSDSSDSDSSGSDSSESGSSESGS) are enriched in low complexity. Positions 309–325 (NGSPDNGTPGSGSSRYT) are enriched in polar residues. Residues 410–427 (LEDELLGSDSSDEDDIDD) are compositionally biased toward acidic residues. Over residues 428 to 443 (GLGGLGLGAGPGGPGG) the composition is skewed to gly residues. Basic residues-rich tracts occupy residues 447–457 (TPKHKPRTDKK) and 465–540 (KRKP…VQRK). Over residues 541–557 (QPREYKQESPEVEREHS) the composition is skewed to basic and acidic residues. Positions 572 to 583 (KILITSLTSSRG) are enriched in low complexity. Residues 591-643 (DGSGSGNGGGDDGNGGGAGNGGGAGNGGGAGNGGGAGNGGGNGGGGNGGGGND) show a composition bias toward gly residues. Residues 660–675 (EHRNRCEDDDDYREKC) are compositionally biased toward basic and acidic residues. A compositionally biased stretch (low complexity) spans 700–724 (SGSSSSSSATESESSSTSTTPSTSS). 3 stretches are compositionally biased toward polar residues: residues 730 to 744 (ILST…TRSG), 758 to 767 (SRPSVATSRG), and 785 to 801 (STGT…TSSA). Low complexity-rich tracts occupy residues 803 to 814 (GLDLSGLLGQLG), 822 to 857 (GPKP…GLLG), and 870 to 907 (KKPT…KLSP).

In terms of tissue distribution, component of the acid-insoluble and acid-soluble organic matrix of calcified layers of the shell (at protein level).

The protein resides in the secreted. The sequence is that of Aspartate, glycine, lysine and serine-rich protein from Lottia gigantea (Giant owl limpet).